Consider the following 87-residue polypeptide: UPF0335 protein RHECIAT_CH0003797 (87 aa).

Belongs to the UPF0335 family.

The protein is UPF0335 protein RHECIAT_CH0003797 of Rhizobium etli (strain CIAT 652).